The sequence spans 317 residues: Transaldolase (317 aa).

Lys126 acts as the Schiff-base intermediate with substrate in catalysis.

It belongs to the transaldolase family. Type 1 subfamily. As to quaternary structure, homodimer.

The protein resides in the cytoplasm. It catalyses the reaction D-sedoheptulose 7-phosphate + D-glyceraldehyde 3-phosphate = D-erythrose 4-phosphate + beta-D-fructose 6-phosphate. It participates in carbohydrate degradation; pentose phosphate pathway; D-glyceraldehyde 3-phosphate and beta-D-fructose 6-phosphate from D-ribose 5-phosphate and D-xylulose 5-phosphate (non-oxidative stage): step 2/3. Functionally, transaldolase is important for the balance of metabolites in the pentose-phosphate pathway. In Burkholderia ambifaria (strain MC40-6), this protein is Transaldolase.